The sequence spans 470 residues: Acetyl-CoA decarbonylase/synthase complex subunit gamma (470 aa).

Positions 1–62 constitute a 4Fe-4S domain; that stretch reads MKVKSPLEVY…DPKVKKKLEE (62 aa). Cys-18, Cys-21, Cys-26, and Cys-43 together coordinate [4Fe-4S] cluster.

In terms of assembly, heterodimer of delta and gamma chains. The ACDS complex is made up of alpha, epsilon, beta, gamma and delta chains with a probable stoichiometry of (alpha(2)epsilon(2))(4)-beta(8)-(gamma(1)delta(1))(8). Corrinoid serves as cofactor. Requires [4Fe-4S] cluster as cofactor.

The enzyme catalyses 5,6,7,8-tetrahydrosarcinapterin + methyl-Co(III)-[corrinoid Fe-S protein] = 5-methyltetrahydrosarcinapterin + Co(I)-[corrinoid Fe-S protein] + H(+). In terms of biological role, part of a complex that catalyzes the reversible cleavage of acetyl-CoA, allowing autotrophic growth from CO(2). The chain is Acetyl-CoA decarbonylase/synthase complex subunit gamma from Archaeoglobus fulgidus (strain ATCC 49558 / DSM 4304 / JCM 9628 / NBRC 100126 / VC-16).